The sequence spans 217 residues: MQNNHLQLEQLACQRGDKILFTDLNLDAKSGDFVQIEGHNGIGKTSLLRIIVGLSFPAKGKVRWNKIEINKNREEYQHNLLYLGHLAGIKPELSAWENLQFYQKIGNCRQSEELLWDILQKVGLLGREDLPAGQLSAGQQKRIALARLWLSNAALWILDEPFTAIDKQGVNVLTQLFEQHVENGGIVILTSHQEIPSNKLQKVRLDQYKFFDQGNMA.

The ABC transporter domain maps to 6 to 216 (LQLEQLACQR…QYKFFDQGNM (211 aa)). 38–45 (GHNGIGKT) contacts ATP.

It belongs to the ABC transporter superfamily. CcmA exporter (TC 3.A.1.107) family. The complex is composed of two ATP-binding proteins (CcmA) and two transmembrane proteins (CcmB).

It localises to the cell inner membrane. The enzyme catalyses heme b(in) + ATP + H2O = heme b(out) + ADP + phosphate + H(+). Its function is as follows. Part of the ABC transporter complex CcmAB involved in the biogenesis of c-type cytochromes; once thought to export heme, this seems not to be the case, but its exact role is uncertain. Responsible for energy coupling to the transport system. The chain is Cytochrome c biogenesis ATP-binding export protein CcmA from Histophilus somni (strain 129Pt) (Haemophilus somnus).